The sequence spans 324 residues: Autolytic lysozyme (324 aa).

Active-site residues include aspartate 5 and glutamate 91. Repeat copies occupy residues 212–234 (LLKR…IKDF), 235–254 (QSIM…SGAA), 255–277 (QQIF…TRYI), 278–300 (QYRV…VAAW), and 301–324 (QSNQ…LDEN). The 5 X 23 AA tandem repeats stretch occupies residues 212-324 (LLKRGLEVDG…ATWSKLLDEN (113 aa)).

It belongs to the glycosyl hydrolase 25 family. As to quaternary structure, monomer.

Its subcellular location is the secreted. It localises to the cytoplasm. The catalysed reaction is Hydrolysis of (1-&gt;4)-beta-linkages between N-acetylmuramic acid and N-acetyl-D-glucosamine residues in a peptidoglycan and between N-acetyl-D-glucosamine residues in chitodextrins.. The protein is Autolytic lysozyme (lyc) of Clostridium acetobutylicum (strain ATCC 824 / DSM 792 / JCM 1419 / IAM 19013 / LMG 5710 / NBRC 13948 / NRRL B-527 / VKM B-1787 / 2291 / W).